Consider the following 437-residue polypeptide: Dolichyl-diphosphooligosaccharide--protein glycosyltransferase 48 kDa subunit (437 aa).

The first 24 residues, 1-24 (MASLRVSVLLVAASCLLLGSGLRA), serve as a signal peptide directing secretion. The Lumenal portion of the chain corresponds to 25-407 (GPRTLVLLEN…QYERFIPSAY (383 aa)). The helical transmembrane segment at 408–428 (PYYASAFSVMFGLFIFSIVFL) threads the bilayer. Residues 429 to 437 (HMKEKEKSD) lie on the Cytoplasmic side of the membrane.

It belongs to the DDOST 48 kDa subunit family. In terms of assembly, component of the oligosaccharyltransferase (OST) complex.

The protein resides in the endoplasmic reticulum membrane. The protein operates within protein modification; protein glycosylation. Functionally, subunit of the oligosaccharyl transferase (OST) complex that catalyzes the initial transfer of a defined glycan (Glc(3)Man(9)GlcNAc(2) in eukaryotes) from the lipid carrier dolichol-pyrophosphate to an asparagine residue within an Asn-X-Ser/Thr consensus motif in nascent polypeptide chains, the first step in protein N-glycosylation. N-glycosylation occurs cotranslationally and the complex associates with the Sec61 complex at the channel-forming translocon complex that mediates protein translocation across the endoplasmic reticulum (ER). All subunits are required for a maximal enzyme activity. Required for the assembly of both SST3A- and SS3B-containing OST complexes. The sequence is that of Dolichyl-diphosphooligosaccharide--protein glycosyltransferase 48 kDa subunit from Xenopus tropicalis (Western clawed frog).